The primary structure comprises 1014 residues: MESLPSLLESIYTTWLSLSSTIWAMDMILAFVCGLGLYHLLLPFLESHLSSPPSNIKFTRKPQIQMTWQSQFKKKFRNHCRNDAKAWGECLKKLKEKEKDKLFLEEMSPGHHLNSLGNIFNSSSAKQDSTTLSPFWNLKEKSEEQVATQKLSYPKISEDHFQQKCDQLFWGLPSLHSESLVAAAWIPQTTSTLPSPFFLFNVISSVYPIQLQDKMSPMLPHTHPLSYLDLQSPHLILSPLEFQTPALNLPVLLPSSLPYNSDFGTSYSQSQSKPQYLPTEIKYNKKPSLAKQIENRSTLPLMVQKPQEAYDILAPNPSQDWVVSILPDNFPICRELREKLEQHIQKWLIQHQWNFPHKIQVSEKMKELQNTVIGNCQTRDKPGTLQALGEHSNEGQKRKFQLEKESGKNLGPILGKISKDPIRGLEKTTAIKDLENNLKAHLGTKSGQIDQGLTPLSMRQSWLAVDDSFYEMENNLTSLKSSAKSMCSSEKLAFLKPETRQALEAHIVRFWAKHRWSLPLKILKPVKLFQLSIESLPVVLCAQTSSTTSVHRTRSAAEVVRFLGKPCLRQMIIEDSSPSPQNLLLVSSPSCKRARRRLPFGVDHEPSTALPTKPECGHISEDLTYNFMNTTSQTRTIFKKEIETREVVLLPRRTSDQNLEAYKHQEKVVSEFPHNVETELAGQPQIYTTTVLPPKRSRSMPLPVDTLTSHVLGDIVVADMDNSLVQQRPSTPKHLVSQKSQIKMLAPTYQSEGTKRQSEIKYEDRPKLTPVTEKKANFGSQYYQTLPKIAQVLPGRPPQRHLGRFLQWIHPKKTIKGHEFHPLKGNPTAAIVQNQRRQVRKIPYMDNNVTEAQELMTTVGQMLEKKMMLQHQPYASKFNQHREVPPAPMSRFSHGHMPVSYLQQRRAPSYPGSCSCQRCSVQNRHIRNQLPQRSVRFSKKPQNPRNPSHKKPQNPRNPSRLSRNAALNLVNSQNRTIVPGNSNHHLYCPRHCALQRDVCRELGHSSVVFPNRKT.

The chain crosses the membrane as a helical span at residues 22-42; that stretch reads IWAMDMILAFVCGLGLYHLLL. Residues 925–961 are disordered; sequence HIRNQLPQRSVRFSKKPQNPRNPSHKKPQNPRNPSRL.

This sequence belongs to the SPATA31 family. Interacts with ACTB and STX1A and/or STX1B.

Its subcellular location is the cytoplasmic vesicle. The protein resides in the secretory vesicle. The protein localises to the acrosome membrane. It is found in the acrosome lumen. Functionally, may play a role in spermatogenesis. The chain is Spermatogenesis-associated protein 31 (Spata31) from Mus musculus (Mouse).